Here is an 81-residue protein sequence, read N- to C-terminus: MATITDLLNDLKIDLGNESLQNVLENYLEELEQANAAVPIILGRMNIDISTAIRKDGVTLSEIQSKKLKELISISYIKYGY.

This is an uncharacterized protein from Carnobacterium maltaromaticum (Carnobacterium piscicola).